A 216-amino-acid chain; its full sequence is Transmembrane emp24 domain-containing protein eca (216 aa).

A signal peptide spans Met-1–Gly-20. The Lumenal segment spans residues Leu-21–Ser-182. The GOLD domain occupies Arg-30–Val-126. A coiled-coil region spans residues Ala-134–Asn-164. A helical membrane pass occupies residues Arg-183–Met-203. Over Arg-204–Val-216 the chain is Cytoplasmic. Positions Lys-213–Val-216 match the Prevents secretion from ER motif.

This sequence belongs to the EMP24/GP25L family.

It is found in the endoplasmic reticulum membrane. Eca and bai are essential, though not redundant, for dorsoventral patterning of the embryo. Specifically required during early embryogenesis for the activity of maternal tkv, while the zygotic tkv is not affected. Involved in Golgi organization. This Drosophila sechellia (Fruit fly) protein is Transmembrane emp24 domain-containing protein eca.